Reading from the N-terminus, the 318-residue chain is 26 kDa endochitinase 1 (318 aa).

Residues 1 to 19 (MRAFVLFAVVAMAATMAVA) form the signal peptide. A Chitin-binding type-1 domain is found at 20–59 (EQCGSQAGGATCPNCLCCSRFGWCGSTPYCGDGCQSQCSG). Cystine bridges form between Cys22/Cys37, Cys31/Cys43, Cys36/Cys49, Cys53/Cys57, Cys98/Cys160, Cys172/Cys180, and Cys279/Cys311. Glu142 (proton donor) is an active-site residue.

Belongs to the glycosyl hydrolase 19 family. Chitinase class I subfamily.

The catalysed reaction is Random endo-hydrolysis of N-acetyl-beta-D-glucosaminide (1-&gt;4)-beta-linkages in chitin and chitodextrins.. Functionally, defense against chitin-containing fungal pathogens. The chain is 26 kDa endochitinase 1 from Hordeum vulgare (Barley).